A 385-amino-acid polypeptide reads, in one-letter code: UPF0284 protein A9601_04941 (385 aa).

This sequence belongs to the UPF0284 family.

This chain is UPF0284 protein A9601_04941, found in Prochlorococcus marinus (strain AS9601).